Here is a 186-residue protein sequence, read N- to C-terminus: Large ribosomal subunit protein uL22 (186 aa).

Residues 159 to 186 are disordered; it reads KAAENEPAKKKLSKKKLQRQKEKMMRNE. Positions 177 to 186 are enriched in basic and acidic residues; it reads RQKEKMMRNE.

This sequence belongs to the universal ribosomal protein uL22 family.

In Aedes albopictus (Asian tiger mosquito), this protein is Large ribosomal subunit protein uL22 (RpL17).